The following is a 222-amino-acid chain: Cytidylate kinase (222 aa).

11 to 19 (GPAGAGKST) lines the ATP pocket.

The protein belongs to the cytidylate kinase family. Type 1 subfamily.

It is found in the cytoplasm. It carries out the reaction CMP + ATP = CDP + ADP. The enzyme catalyses dCMP + ATP = dCDP + ADP. This Desulforamulus reducens (strain ATCC BAA-1160 / DSM 100696 / MI-1) (Desulfotomaculum reducens) protein is Cytidylate kinase.